We begin with the raw amino-acid sequence, 261 residues long: MTHQTHAYHMVNPSPWPLTGAFSALLLTSGLVMWFHYNSITLLTLGLLTNILTMYQWWRDVIREGTYQGHHTPIVQKGLRYGMILFIVSEVFFFAGFFWAFYHSSLVPTHDLGGCWPPTGISPLNPLEVPLLNTSVLLASGVSITWAHHSLMEGKRNHMNQALLITIMLGLYFTILQASEYFETSFSISDGIYGSTFFMATGFHGLHVIIGSTFLIVCLLRQLKFHFTSKHHFGFEAAAWYWHFVDVVWLFLYVSIYWWGS.

Residues 1–15 lie on the Mitochondrial matrix side of the membrane; that stretch reads MTHQTHAYHMVNPSP. The helical transmembrane segment at 16-33 threads the bilayer; sequence WPLTGAFSALLLTSGLVM. The Mitochondrial intermembrane portion of the chain corresponds to 34–38; that stretch reads WFHYN. A helical transmembrane segment spans residues 39–62; sequence SITLLTLGLLTNILTMYQWWRDVI. The Mitochondrial matrix segment spans residues 63 to 77; it reads REGTYQGHHTPIVQK. A helical membrane pass occupies residues 78-99; the sequence is GLRYGMILFIVSEVFFFAGFFW. At 100 to 129 the chain is on the mitochondrial intermembrane side; the sequence is AFYHSSLVPTHDLGGCWPPTGISPLNPLEV. The helical transmembrane segment at 130 to 150 threads the bilayer; that stretch reads PLLNTSVLLASGVSITWAHHS. Topologically, residues 151–156 are mitochondrial matrix; sequence LMEGKR. The chain crosses the membrane as a helical span at residues 157–178; that stretch reads NHMNQALLITIMLGLYFTILQA. Topologically, residues 179-198 are mitochondrial intermembrane; the sequence is SEYFETSFSISDGIYGSTFF. The chain crosses the membrane as a helical span at residues 199 to 224; it reads MATGFHGLHVIIGSTFLIVCLLRQLK. The Mitochondrial matrix segment spans residues 225–232; it reads FHFTSKHH. The chain crosses the membrane as a helical span at residues 233-255; it reads FGFEAAAWYWHFVDVVWLFLYVS. Residues 256-261 lie on the Mitochondrial intermembrane side of the membrane; the sequence is IYWWGS.

Belongs to the cytochrome c oxidase subunit 3 family. In terms of assembly, component of the cytochrome c oxidase (complex IV, CIV), a multisubunit enzyme composed of 14 subunits. The complex is composed of a catalytic core of 3 subunits MT-CO1, MT-CO2 and MT-CO3, encoded in the mitochondrial DNA, and 11 supernumerary subunits COX4I, COX5A, COX5B, COX6A, COX6B, COX6C, COX7A, COX7B, COX7C, COX8 and NDUFA4, which are encoded in the nuclear genome. The complex exists as a monomer or a dimer and forms supercomplexes (SCs) in the inner mitochondrial membrane with NADH-ubiquinone oxidoreductase (complex I, CI) and ubiquinol-cytochrome c oxidoreductase (cytochrome b-c1 complex, complex III, CIII), resulting in different assemblies (supercomplex SCI(1)III(2)IV(1) and megacomplex MCI(2)III(2)IV(2)).

It is found in the mitochondrion inner membrane. The enzyme catalyses 4 Fe(II)-[cytochrome c] + O2 + 8 H(+)(in) = 4 Fe(III)-[cytochrome c] + 2 H2O + 4 H(+)(out). Functionally, component of the cytochrome c oxidase, the last enzyme in the mitochondrial electron transport chain which drives oxidative phosphorylation. The respiratory chain contains 3 multisubunit complexes succinate dehydrogenase (complex II, CII), ubiquinol-cytochrome c oxidoreductase (cytochrome b-c1 complex, complex III, CIII) and cytochrome c oxidase (complex IV, CIV), that cooperate to transfer electrons derived from NADH and succinate to molecular oxygen, creating an electrochemical gradient over the inner membrane that drives transmembrane transport and the ATP synthase. Cytochrome c oxidase is the component of the respiratory chain that catalyzes the reduction of oxygen to water. Electrons originating from reduced cytochrome c in the intermembrane space (IMS) are transferred via the dinuclear copper A center (CU(A)) of subunit 2 and heme A of subunit 1 to the active site in subunit 1, a binuclear center (BNC) formed by heme A3 and copper B (CU(B)). The BNC reduces molecular oxygen to 2 water molecules using 4 electrons from cytochrome c in the IMS and 4 protons from the mitochondrial matrix. This chain is Cytochrome c oxidase subunit 3 (mt-Co3), found in Mus musculus (Mouse).